Here is a 557-residue protein sequence, read N- to C-terminus: 2-succinyl-5-enolpyruvyl-6-hydroxy-3-cyclohexene-1-carboxylate synthase (557 aa).

It belongs to the TPP enzyme family. MenD subfamily. In terms of assembly, homodimer. Mg(2+) is required as a cofactor. Requires Mn(2+) as cofactor. The cofactor is thiamine diphosphate.

It carries out the reaction isochorismate + 2-oxoglutarate + H(+) = 5-enolpyruvoyl-6-hydroxy-2-succinyl-cyclohex-3-ene-1-carboxylate + CO2. It functions in the pathway quinol/quinone metabolism; 1,4-dihydroxy-2-naphthoate biosynthesis; 1,4-dihydroxy-2-naphthoate from chorismate: step 2/7. Its pathway is quinol/quinone metabolism; menaquinone biosynthesis. Catalyzes the thiamine diphosphate-dependent decarboxylation of 2-oxoglutarate and the subsequent addition of the resulting succinic semialdehyde-thiamine pyrophosphate anion to isochorismate to yield 2-succinyl-5-enolpyruvyl-6-hydroxy-3-cyclohexene-1-carboxylate (SEPHCHC). In Staphylococcus aureus (strain bovine RF122 / ET3-1), this protein is 2-succinyl-5-enolpyruvyl-6-hydroxy-3-cyclohexene-1-carboxylate synthase.